A 109-amino-acid chain; its full sequence is Nucleoid-associated protein MADE_1013280 (109 aa).

A disordered region spans residues Thr86–Phe109. Pro residues predominate over residues Pro99 to Phe109.

It belongs to the YbaB/EbfC family. In terms of assembly, homodimer.

It localises to the cytoplasm. It is found in the nucleoid. In terms of biological role, binds to DNA and alters its conformation. May be involved in regulation of gene expression, nucleoid organization and DNA protection. This chain is Nucleoid-associated protein MADE_1013280, found in Alteromonas mediterranea (strain DSM 17117 / CIP 110805 / LMG 28347 / Deep ecotype).